We begin with the raw amino-acid sequence, 330 residues long: Phosphate acyltransferase (330 aa).

This sequence belongs to the PlsX family. In terms of assembly, homodimer. Probably interacts with PlsY.

The protein resides in the cytoplasm. The enzyme catalyses a fatty acyl-[ACP] + phosphate = an acyl phosphate + holo-[ACP]. The protein operates within lipid metabolism; phospholipid metabolism. Catalyzes the reversible formation of acyl-phosphate (acyl-PO(4)) from acyl-[acyl-carrier-protein] (acyl-ACP). This enzyme utilizes acyl-ACP as fatty acyl donor, but not acyl-CoA. This chain is Phosphate acyltransferase, found in Streptococcus pneumoniae serotype 2 (strain D39 / NCTC 7466).